A 202-amino-acid chain; its full sequence is Securin (202 aa).

A2 carries the N-acetylalanine modification. A disordered region spans residues 35 to 90 (LDGRSQVSTPRFGKTFDAPPALPKATRKALGTVNRATEKSVKTKGPLKQKQPSFSA). The D-box signature appears at 61–64 (RKAL). Short sequence motifs (TEK-box) lie at residues 71–73 (TEK) and 94–96 (TEK). Residues 163 to 173 (PPSPVKMPSPP) carry the SH3-binding motif. A Phosphoserine; by CDK1 modification is found at S165.

This sequence belongs to the securin family. In terms of assembly, interacts with RPS10 and DNAJA1. Interacts with the caspase-like ESPL1, and prevents its protease activity probably by covering its active site. Interacts with TP53 and blocks its activity probably by blocking its binding to DNA. Interacts with the Ku 70 kDa subunit of ds-DNA kinase. Interacts with PTTG1IP. In terms of processing, phosphorylated at Ser-165 by CDK1 during mitosis. Phosphorylated in vitro by ds-DNA kinase. Post-translationally, ubiquitinated through 'Lys-11' linkage of ubiquitin moieties by the anaphase promoting complex (APC) at the onset of anaphase, conducting to its degradation. 'Lys-11'-linked ubiquitination is mediated by the E2 ligase UBE2C/UBCH10. Expressed at low level in most tissues, except in adult testis, where it is highly expressed. Overexpressed in many patients suffering from pituitary adenomas, primary epithelial neoplasias, and esophageal cancer.

It is found in the cytoplasm. Its subcellular location is the nucleus. Its function is as follows. Regulatory protein, which plays a central role in chromosome stability, in the p53/TP53 pathway, and DNA repair. Probably acts by blocking the action of key proteins. During the mitosis, it blocks Separase/ESPL1 function, preventing the proteolysis of the cohesin complex and the subsequent segregation of the chromosomes. At the onset of anaphase, it is ubiquitinated, conducting to its destruction and to the liberation of ESPL1. Its function is however not limited to a blocking activity, since it is required to activate ESPL1. Negatively regulates the transcriptional activity and related apoptosis activity of TP53. The negative regulation of TP53 may explain the strong transforming capability of the protein when it is overexpressed. May also play a role in DNA repair via its interaction with Ku, possibly by connecting DNA damage-response pathways with sister chromatid separation. This chain is Securin (PTTG1), found in Homo sapiens (Human).